Here is a 908-residue protein sequence, read N- to C-terminus: MAQSSTQQRGRTPLMRQYYKIKERHPKAILLFRMGDFYESFDDDAKTVSRLLGITLTERNNGDADDVPMAGFPHHALDSHLPKLIRSGLRVAICEQVEDADDSSGKVVDRDVVEVVTPGVSFHDQLLNPKQSNFLAALHFGTGRDKDRIGFSFIDATTGEFSVTEAGLDQLQDLIQTVAPSEVIVDKRKTERLQQHLREVPFTVTEQEDWVFKYDFAYQTLLEHFETHSLKGFGVDDMDLGVVASGAALHYLGETQKGALPHVRKIKRYSKDEHIALDPETKRNLELVQSIQDDGHEGTLVSILDETETPMGGRRLRAWLVRPLRDVGRIRHRLDAVEACVDDRTLRDDLREELNQMGDLERLAGKVATGRAAPGDLIAIKHTLRRLPNVLGLLTDADSDALGAIEDDLRSCPEMVDRIQSALVDDPPAKISEGGLIRDGYSEELDELRTIAQEGKDWVANLETEESERTDIPSLKVGFNKVFGYYIEVTNTHADKVPEDYIRKQTLVDSERYVTPELKEMEEKILTAEEKIETLEQELFNELRSQIAQQTGILQENAELLAHLDCFAGLAEVAEQHDYTRPSVDDGLTIDIEEGRHPVVEQTLPPGDPFIPNDMALDPDDEQVLIITGPNMAGKSVALRQVGLIVLLAQVGSFVPAEAAQIGVVDRIFTRVGASDNLAAGESTFLVEMNEAANILNNATARSLILFDEVGRGTSTFDGLSIAWAIVEYLHERPEVAARTLFATHYHELNAMADRLERVHNYRIQVSEHEGEIVFLRKLIPGGADHSYGIEVAKMAGLPDAVIARAREVLQNLESQHLEVGADEADGAPSEDPPSEDPPSGDGVRAKKGEADAVPDLEDSQANQMHLFGQPDPAAEEIKEMLGEIDPNRITPVEALMKLAEMKETLAD.

629–636 contributes to the ATP binding site; sequence GPNMAGKS. Positions 822-863 are disordered; sequence ADEADGAPSEDPPSEDPPSGDGVRAKKGEADAVPDLEDSQAN.

The protein belongs to the DNA mismatch repair MutS family.

In terms of biological role, this protein is involved in the repair of mismatches in DNA. It is possible that it carries out the mismatch recognition step. This protein has a weak ATPase activity. The chain is DNA mismatch repair protein MutS from Salinibacter ruber (strain DSM 13855 / M31).